The primary structure comprises 251 residues: MLTPERHQLIIDQIEKHDVVKIQELINLTNASESTIRRDLSTLEERGFLKRVHGGAAKLSDIRLEPDMLEKSSKNLHDKLKIAEKAASLLEEGDCIYLDAGTTTLHMIDFMDKTKDIVVVTNGVMHIDALIRKEISFYLLGGYVKHRTGAIIGGASLVAMDQYRFDKSFLGTNGVHTEAGFTTPDPDEALLKQKAIKQAKHAYVLADPSKFGEISFSAFAGIGDATIITTDAEELTFDNYQEKTVVKVVKP.

In terms of domain architecture, HTH deoR-type spans 3-58; it reads TPERHQLIIDQIEKHDVVKIQELINLTNASESTIRRDLSTLEERGFLKRVHGGAAK. The segment at residues 20–39 is a DNA-binding region (H-T-H motif); the sequence is VKIQELINLTNASESTIRRD.

This is an uncharacterized protein from Bacillus subtilis (strain 168).